A 353-amino-acid polypeptide reads, in one-letter code: Photosystem II D2 protein (353 aa).

T2 is modified (N-acetylthreonine). At T2 the chain carries Phosphothreonine. Residues 41-61 (CAYFAVGGWFTGTTFVTSWYT) traverse the membrane as a helical segment. Position 118 (H118) interacts with chlorophyll a. A helical membrane pass occupies residues 125–141 (GFMLRQFELARSVQLRP). 2 residues coordinate pheophytin a: Q130 and N143. The chain crosses the membrane as a helical span at residues 153–166 (VFVSVFLIYPLGQS). Residue H198 participates in chlorophyll a binding. Residues 208–228 (AALLCAIHGATVENTLFEDGD) traverse the membrane as a helical segment. 2 residues coordinate a plastoquinone: H215 and F262. Residue H215 coordinates Fe cation. H269 serves as a coordination point for Fe cation. Residues 279–295 (GLWMSALGVVGLALNLR) traverse the membrane as a helical segment.

The protein belongs to the reaction center PufL/M/PsbA/D family. In terms of assembly, PSII is composed of 1 copy each of membrane proteins PsbA, PsbB, PsbC, PsbD, PsbE, PsbF, PsbH, PsbI, PsbJ, PsbK, PsbL, PsbM, PsbT, PsbX, PsbY, PsbZ, Psb30/Ycf12, at least 3 peripheral proteins of the oxygen-evolving complex and a large number of cofactors. It forms dimeric complexes. The D1/D2 heterodimer binds P680, chlorophylls that are the primary electron donor of PSII, and subsequent electron acceptors. It shares a non-heme iron and each subunit binds pheophytin, quinone, additional chlorophylls, carotenoids and lipids. There is also a Cl(-1) ion associated with D1 and D2, which is required for oxygen evolution. The PSII complex binds additional chlorophylls, carotenoids and specific lipids. is required as a cofactor.

Its subcellular location is the plastid. The protein resides in the chloroplast thylakoid membrane. The enzyme catalyses 2 a plastoquinone + 4 hnu + 2 H2O = 2 a plastoquinol + O2. Functionally, photosystem II (PSII) is a light-driven water:plastoquinone oxidoreductase that uses light energy to abstract electrons from H(2)O, generating O(2) and a proton gradient subsequently used for ATP formation. It consists of a core antenna complex that captures photons, and an electron transfer chain that converts photonic excitation into a charge separation. The D1/D2 (PsbA/PsbD) reaction center heterodimer binds P680, the primary electron donor of PSII as well as several subsequent electron acceptors. D2 is needed for assembly of a stable PSII complex. The sequence is that of Photosystem II D2 protein from Cucumis sativus (Cucumber).